The sequence spans 350 residues: Protein RecA (350 aa).

Position 80 to 87 (80 to 87 (GPESSGKT)) interacts with ATP.

The protein belongs to the RecA family.

Its subcellular location is the cytoplasm. In terms of biological role, can catalyze the hydrolysis of ATP in the presence of single-stranded DNA, the ATP-dependent uptake of single-stranded DNA by duplex DNA, and the ATP-dependent hybridization of homologous single-stranded DNAs. It interacts with LexA causing its activation and leading to its autocatalytic cleavage. This chain is Protein RecA, found in Chlorobium limicola (strain DSM 245 / NBRC 103803 / 6330).